We begin with the raw amino-acid sequence, 432 residues long: Putative D-alanyl-D-alanine carboxypeptidase (432 aa).

A helical; Signal-anchor membrane pass occupies residues 7-25 (ATVLLTFSLSAFAVEYPVL).

It belongs to the peptidase S12 family. YfeW subfamily.

Its subcellular location is the cell inner membrane. It carries out the reaction Preferential cleavage: (Ac)2-L-Lys-D-Ala-|-D-Ala. Also transpeptidation of peptidyl-alanyl moieties that are N-acyl substituents of D-alanine.. This Salmonella typhi protein is Putative D-alanyl-D-alanine carboxypeptidase.